The chain runs to 629 residues: tRNA uridine 5-carboxymethylaminomethyl modification enzyme MnmG (629 aa).

Residues Gly14–Gly19, Val126, and Ser181 contribute to the FAD site. Position 273 to 287 (Gly273 to Phe287) interacts with NAD(+). FAD is bound at residue Gln370.

It belongs to the MnmG family. As to quaternary structure, homodimer. Heterotetramer of two MnmE and two MnmG subunits. FAD is required as a cofactor.

The protein resides in the cytoplasm. Its function is as follows. NAD-binding protein involved in the addition of a carboxymethylaminomethyl (cmnm) group at the wobble position (U34) of certain tRNAs, forming tRNA-cmnm(5)s(2)U34. The polypeptide is tRNA uridine 5-carboxymethylaminomethyl modification enzyme MnmG (Bacillus mycoides (strain KBAB4) (Bacillus weihenstephanensis)).